A 365-amino-acid polypeptide reads, in one-letter code: tRNA 2-selenouridine synthase (365 aa).

The region spanning phenylalanine 15 to glutamate 138 is the Rhodanese domain. Cysteine 98 serves as the catalytic S-selanylcysteine intermediate.

It belongs to the SelU family. As to quaternary structure, monomer.

It catalyses the reaction 5-methylaminomethyl-2-thiouridine(34) in tRNA + selenophosphate + (2E)-geranyl diphosphate + H2O + H(+) = 5-methylaminomethyl-2-selenouridine(34) in tRNA + (2E)-thiogeraniol + phosphate + diphosphate. The catalysed reaction is 5-methylaminomethyl-2-thiouridine(34) in tRNA + (2E)-geranyl diphosphate = 5-methylaminomethyl-S-(2E)-geranyl-thiouridine(34) in tRNA + diphosphate. The enzyme catalyses 5-methylaminomethyl-S-(2E)-geranyl-thiouridine(34) in tRNA + selenophosphate + H(+) = 5-methylaminomethyl-2-(Se-phospho)selenouridine(34) in tRNA + (2E)-thiogeraniol. It carries out the reaction 5-methylaminomethyl-2-(Se-phospho)selenouridine(34) in tRNA + H2O = 5-methylaminomethyl-2-selenouridine(34) in tRNA + phosphate. Its function is as follows. Involved in the post-transcriptional modification of the uridine at the wobble position (U34) of tRNA(Lys), tRNA(Glu) and tRNA(Gln). Catalyzes the conversion of 2-thiouridine (S2U-RNA) to 2-selenouridine (Se2U-RNA). Acts in a two-step process involving geranylation of 2-thiouridine (S2U) to S-geranyl-2-thiouridine (geS2U) and subsequent selenation of the latter derivative to 2-selenouridine (Se2U) in the tRNA chain. The sequence is that of tRNA 2-selenouridine synthase from Shewanella sp. (strain ANA-3).